The sequence spans 81 residues: Exodeoxyribonuclease 7 small subunit (81 aa).

The interval 61-81 (MNDSDQEVAFETPQGGTGDAD) is disordered.

The protein belongs to the XseB family. As to quaternary structure, heterooligomer composed of large and small subunits.

It localises to the cytoplasm. It carries out the reaction Exonucleolytic cleavage in either 5'- to 3'- or 3'- to 5'-direction to yield nucleoside 5'-phosphates.. Functionally, bidirectionally degrades single-stranded DNA into large acid-insoluble oligonucleotides, which are then degraded further into small acid-soluble oligonucleotides. The chain is Exodeoxyribonuclease 7 small subunit from Levilactobacillus brevis (strain ATCC 367 / BCRC 12310 / CIP 105137 / JCM 1170 / LMG 11437 / NCIMB 947 / NCTC 947) (Lactobacillus brevis).